The sequence spans 355 residues: Protein RecA (355 aa).

67–74 (GPESSGKT) contacts ATP.

Belongs to the RecA family.

It is found in the cytoplasm. Functionally, can catalyze the hydrolysis of ATP in the presence of single-stranded DNA, the ATP-dependent uptake of single-stranded DNA by duplex DNA, and the ATP-dependent hybridization of homologous single-stranded DNAs. It interacts with LexA causing its activation and leading to its autocatalytic cleavage. This is Protein RecA from Proteus mirabilis (strain HI4320).